The following is a 239-amino-acid chain: Probable transcriptional regulatory protein lmo0369 (239 aa).

It belongs to the TACO1 family. YeeN subfamily.

It localises to the cytoplasm. In Listeria monocytogenes serovar 1/2a (strain ATCC BAA-679 / EGD-e), this protein is Probable transcriptional regulatory protein lmo0369.